The chain runs to 400 residues: NADPH dehydrogenase 1 (400 aa).

Threonine 38 and glutamine 115 together coordinate FMN. Residues histidine 192 and asparagine 195 each contribute to the substrate site. Residue tyrosine 197 is the Proton donor of the active site. Residues arginine 244 and arginine 349 each contribute to the FMN site. Tyrosine 376 lines the substrate pocket.

As to quaternary structure, homodimer or heterodimer. The cofactor is FMN.

It carries out the reaction A + NADPH + H(+) = AH2 + NADP(+). Functionally, flavin-dependent enoate reductase that catalyzes the chemo- and stereoslective hydrogenation of electron-poor alkenes. The enzyme is reduced by NADPH, and oxygen, quinones, and alpha,beta-unsaturated aldehydes and ketones can act as electron acceptors to complete catalytic turnover. The physiological oxidant remains elusive. The polypeptide is NADPH dehydrogenase 1 (Saccharomyces pastorianus (Lager yeast)).